Reading from the N-terminus, the 168-residue chain is DNA damage-inducible transcript 3 protein (168 aa).

Positions 10 to 18 are interaction with TRIB3; that stretch reads FETVSSWEL. Residues 10–26 are N-terminal; the sequence is FETVSSWELEAWYEDLQ. Ser-14, Ser-15, Ser-30, and Ser-31 each carry phosphoserine; by CK2. The segment at 34-130 is disordered; it reads IGGTYISSPG…EKEQENERKV (97 aa). Residues 73 to 88 show a composition bias toward low complexity; the sequence is TSTSQSPRSPDSSQSS. Phosphoserine; by MAPK14 is present on residues Ser-78 and Ser-81. In terms of domain architecture, bZIP spans 98 to 161; the sequence is QGRTRKRKQS…ETTRRALIDR (64 aa). A basic motif region spans residues 100–129; the sequence is RTRKRKQSGQCAARAGKQRMKEKEQENERK. The segment covering 118–130 has biased composition (basic and acidic residues); that stretch reads RMKEKEQENERKV. A leucine-zipper region spans residues 133 to 147; that stretch reads LAEENERLKLEIERL.

This sequence belongs to the bZIP family. In terms of assembly, heterodimer. Interacts with TCF7L2/TCF4, EP300/P300, HDAC1, HDAC5 and HDAC6. Interacts with TRIB3 which blocks its association with EP300/P300. Interacts with FOXO3, CEBPB and ATF4. Ubiquitinated, leading to its degradation by the proteasome. Post-translationally, phosphorylation at serine residues by MAPK14 enhances its transcriptional activation activity while phosphorylation at serine residues by CK2 inhibits its transcriptional activation activity.

The protein resides in the cytoplasm. Its subcellular location is the nucleus. Its function is as follows. Multifunctional transcription factor in ER stress response. Plays an essential role in the response to a wide variety of cell stresses and induces cell cycle arrest and apoptosis in response to ER stress. Plays a dual role both as an inhibitor of CCAAT/enhancer-binding protein (C/EBP) function and as an activator of other genes. Acts as a dominant-negative regulator of C/EBP-induced transcription: dimerizes with members of the C/EBP family, impairs their association with C/EBP binding sites in the promoter regions, and inhibits the expression of C/EBP regulated genes. Positively regulates the transcription of TRIB3, IL6, IL8, IL23, TNFRSF10B/DR5, PPP1R15A/GADD34, BBC3/PUMA, BCL2L11/BIM and ERO1L. Negatively regulates; expression of BCL2 and MYOD1, ATF4-dependent transcriptional activation of asparagine synthetase (ASNS), CEBPA-dependent transcriptional activation of hepcidin (HAMP) and CEBPB-mediated expression of peroxisome proliferator-activated receptor gamma (PPARG). Inhibits the canonical Wnt signaling pathway by binding to TCF7L2/TCF4, impairing its DNA-binding properties and repressing its transcriptional activity. Plays a regulatory role in the inflammatory response through the induction of caspase-11 (CASP4/CASP11) which induces the activation of caspase-1 (CASP1) and both these caspases increase the activation of pro-IL1B to mature IL1B which is involved in the inflammatory response. Acts as a major regulator of postnatal neovascularization through regulation of endothelial nitric oxide synthase (NOS3)-related signaling. The polypeptide is DNA damage-inducible transcript 3 protein (Ddit3) (Rattus norvegicus (Rat)).